We begin with the raw amino-acid sequence, 677 residues long: MFERNQKTIFVLDHTRYFSIASEEYISMEYLKGKQTGLEAGANGGTQFSKSLWTCACESSIEYCRVVWDLFPGTKHVRFIVSDTAAHIVNTWSPSTQNMSHVMNAMVMVGVPSMPQSSDSSVIHGLRAAIEALAEPTDEQMQAMGGKQTLHIPNEGRVICITSARDNTSMKSLEDIFHTVLVQQNSLMTSPPSKKGLPIDHCHLVILNIVPLGVESLVTNRSLLEISPLLNVEIHTVPAPDISYKLTHLILDHYELASTTVTNIPMKEEQNANSSANYDVEILHSRQAHTIAGGPDFNLPTSIKTGSTYETVTLKWCTPRGCSSADLQPCLGQFRVTPVDVTSRPSSCLINFLLNGRSVLLEMPRKTGTKATSHMLSARGGEIFVHALSILRSCMDEAPAIQDGPGGRVTDYRFGELGQLIKLSRMIPLKAKDPSHPTHSTLRRRLPRYFPWTTSSSILFNLQRQINWLPHFLHLLVKEDMDKQDEVRCQQHIHELYKSASRGDMLPFTNSNGGRLKLSKAKDQYRLLYRELEQLIQLNSFTPHHKNLLESLQSLRSAYGDAPTKSESANALLRSYTESPLSPERLEPTSSSSSNSLLKARKRRMSTCGQRSLFDIISSAERSQSNKRLDFSGRLCTLPGQVAKLYPDFGNKDKDSLVIAGGVASTTASAKEESIRG.

The stretch at 515 to 540 (RLKLSKAKDQYRLLYRELEQLIQLNS) forms a coiled coil. Positions 578-598 (ESPLSPERLEPTSSSSSNSLL) are enriched in low complexity. The disordered stretch occupies residues 578–604 (ESPLSPERLEPTSSSSSNSLLKARKRR). A Nuclear localization signal (NLS) motif is present at residues 598-604 (LKARKRR).

This sequence belongs to the Integrator subunit 13 family. As to quaternary structure, belongs to the multiprotein complex Integrator, at least composed of IntS1, IntS2, IntS3, IntS4, omd/IntS5, IntS6, defl/IntS7, IntS8, IntS9, IntS10, IntS11, IntS12, asun/IntS13, IntS14 and IntS15. The core complex associates with protein phosphatase 2A subunits mts/PP2A and Pp2A-29B, to form the Integrator-PP2A (INTAC) complex. Post-translationally, phosphorylated.

The protein resides in the nucleus. Its subcellular location is the cytoplasm. The protein localises to the perinuclear region. Component of the integrator complex, a multiprotein complex that terminates RNA polymerase II (Pol II) transcription in the promoter-proximal region of genes. The integrator complex provides a quality checkpoint during transcription elongation by driving premature transcription termination of transcripts that are unfavorably configured for transcriptional elongation: the complex terminates transcription by (1) catalyzing dephosphorylation of the C-terminal domain (CTD) of Pol II subunit Polr2A/Rbp1 and Spt5, and (2) degrading the exiting nascent RNA transcript via endonuclease activity. The integrator complex is also involved in the 3'-end processing of the U7 snRNA, and also the spliceosomal snRNAs U1, U2, U4 and U5. The polypeptide is Protein asunder (asun) (Drosophila willistoni (Fruit fly)).